The sequence spans 72 residues: Translation initiation factor IF-1 2 (72 aa).

One can recognise an S1-like domain in the interval 1–72 (MAKDDVIQMQ…SRARIVFRTK (72 aa)).

Belongs to the IF-1 family. In terms of assembly, component of the 30S ribosomal translation pre-initiation complex which assembles on the 30S ribosome in the order IF-2 and IF-3, IF-1 and N-formylmethionyl-tRNA(fMet); mRNA recruitment can occur at any time during PIC assembly.

The protein localises to the cytoplasm. Its function is as follows. One of the essential components for the initiation of protein synthesis. Stabilizes the binding of IF-2 and IF-3 on the 30S subunit to which N-formylmethionyl-tRNA(fMet) subsequently binds. Helps modulate mRNA selection, yielding the 30S pre-initiation complex (PIC). Upon addition of the 50S ribosomal subunit IF-1, IF-2 and IF-3 are released leaving the mature 70S translation initiation complex. This Cupriavidus necator (strain ATCC 17699 / DSM 428 / KCTC 22496 / NCIMB 10442 / H16 / Stanier 337) (Ralstonia eutropha) protein is Translation initiation factor IF-1 2.